The following is a 1476-amino-acid chain: Glucosyltransferase-I (1476 aa).

The N-terminal stretch at Met-1 to Gly-34 is a signal peptide. Disordered stretches follow at residues Glu-42 to Ser-89 and Pro-102 to Asp-141. Polar residues-rich tracts occupy residues Ser-43 to His-81 and Pro-102 to Glu-139. Cell wall-binding repeat units follow at residues Leu-159–Val-178 and Arg-179–Tyr-199. Residues Thr-200–Lys-1051 are catalytic; approximate. Cell wall-binding repeat units lie at residues Lys-1087–Met-1106, Val-1107–Gln-1126, Ser-1170–Gln-1189, Arg-1214–Ala-1234, Val-1235–Gln-1254, Arg-1279–Ala-1299, Val-1300–Gln-1319, Arg-1344–Ala-1364, Val-1365–Gln-1384, Arg-1409–Ala-1429, and Val-1430–Gln-1449.

Belongs to the glycosyl hydrolase 70 family.

It localises to the secreted. The catalysed reaction is [(1-&gt;6)-alpha-D-glucosyl](n) + sucrose = [(1-&gt;6)-alpha-D-glucosyl](n+1) + D-fructose. Production of extracellular glucans, that are thought to play a key role in the development of the dental plaque because of their ability to adhere to smooth surfaces and mediate the aggregation of bacterial cells and food debris. The chain is Glucosyltransferase-I (gtfB) from Streptococcus mutans serotype c (strain ATCC 700610 / UA159).